Reading from the N-terminus, the 263-residue chain is Probable HTH-type transcriptional regulator ArcR (263 aa).

An HTH iclR-type domain is found at 14-74 (ITSVLNAVEI…DGDGTYQLGD (61 aa)). Positions 35–54 (LQELTTELDLTKATIHTYMA) form a DNA-binding region, H-T-H motif. The IclR-ED domain occupies 89 to 262 (LYRLGREEID…ANIIEVRLET (174 aa)).

Functionally, probably regulates transcription of the arcABC operon. The sequence is that of Probable HTH-type transcriptional regulator ArcR (arcR) from Halobacterium salinarum (strain ATCC 29341 / DSM 671 / R1).